The sequence spans 171 residues: Co-chaperone protein HscB (171 aa).

Residues 2 to 74 (DYFTLFGLPA…LTRAEYLLSL (73 aa)) enclose the J domain.

It belongs to the HscB family. As to quaternary structure, interacts with HscA and stimulates its ATPase activity. Interacts with IscU.

Its function is as follows. Co-chaperone involved in the maturation of iron-sulfur cluster-containing proteins. Seems to help targeting proteins to be folded toward HscA. This Salmonella agona (strain SL483) protein is Co-chaperone protein HscB.